A 109-amino-acid chain; its full sequence is Nucleoid-associated protein Spea_1509 (109 aa).

The disordered stretch occupies residues 87 to 109; the sequence is NQKEKMAEVTGGMQLPPGMKMPF.

The protein belongs to the YbaB/EbfC family. As to quaternary structure, homodimer.

It is found in the cytoplasm. Its subcellular location is the nucleoid. Its function is as follows. Binds to DNA and alters its conformation. May be involved in regulation of gene expression, nucleoid organization and DNA protection. The sequence is that of Nucleoid-associated protein Spea_1509 from Shewanella pealeana (strain ATCC 700345 / ANG-SQ1).